Here is a 226-residue protein sequence, read N- to C-terminus: EEF1A lysine methyltransferase 3 (226 aa).

S-adenosyl-L-methionine-binding positions include tryptophan 57, 83 to 85 (GAG), aspartate 104, tryptophan 133, and alanine 150.

The protein belongs to the methyltransferase superfamily. METTL21 family. As to quaternary structure, interacts with members of the heat shock protein 70 and 90 families and of the TCP-1 chaperonin family, as well as with HSPD1, STIP1 and tubulin; at least some of these proteins may be methylation substrates.

The protein resides in the cytoplasm. Its subcellular location is the cytoskeleton. It is found in the microtubule organizing center. It localises to the centrosome. It catalyses the reaction L-lysyl-[protein] + 3 S-adenosyl-L-methionine = N(6),N(6),N(6)-trimethyl-L-lysyl-[protein] + 3 S-adenosyl-L-homocysteine + 3 H(+). The enzyme catalyses L-lysyl-[protein] + S-adenosyl-L-methionine = N(6)-methyl-L-lysyl-[protein] + S-adenosyl-L-homocysteine + H(+). The catalysed reaction is N(6)-methyl-L-lysyl-[protein] + S-adenosyl-L-methionine = N(6),N(6)-dimethyl-L-lysyl-[protein] + S-adenosyl-L-homocysteine + H(+). It carries out the reaction N(6),N(6)-dimethyl-L-lysyl-[protein] + S-adenosyl-L-methionine = N(6),N(6),N(6)-trimethyl-L-lysyl-[protein] + S-adenosyl-L-homocysteine + H(+). In terms of biological role, protein-lysine methyltransferase that selectively mono-, di- and trimethylates 'Lys-165' of the translation elongation factors EEF1A1 and EEF1A2 in an aminoacyl-tRNA and GTP-dependent manner. EEF1A1 methylation by EEF1AKMT3 is dynamic as well as inducible by stress conditions, such as ER-stress, and plays a regulatory role on mRNA translation. The sequence is that of EEF1A lysine methyltransferase 3 from Bos taurus (Bovine).